The sequence spans 196 residues: MTALTLLMILSAYLLGSISSAVVICRLWGLPDPRKEGSGNPGATNVYRVGGKIPALLTLWFDVLKGMVPVWGSYFLGIEPFFLGLIAVAACLGHIFPLYFHFRGGKAVATALGAMFPVAWEMALLLIATWLLVFRVSRVSSLAALVTVCLAPFYAYWIKPQYTVPVIMISLLILWRHQANILRLSSGEEKAFKRRR.

4 helical membrane-spanning segments follow: residues 4–24, 80–100, 114–134, and 155–175; these read LTLL…AVVI, PFFL…PLYF, AMFP…LLVF, and AYWI…LILW.

The protein belongs to the PlsY family. Probably interacts with PlsX.

It localises to the cell inner membrane. It carries out the reaction an acyl phosphate + sn-glycerol 3-phosphate = a 1-acyl-sn-glycero-3-phosphate + phosphate. The protein operates within lipid metabolism; phospholipid metabolism. In terms of biological role, catalyzes the transfer of an acyl group from acyl-phosphate (acyl-PO(4)) to glycerol-3-phosphate (G3P) to form lysophosphatidic acid (LPA). This enzyme utilizes acyl-phosphate as fatty acyl donor, but not acyl-CoA or acyl-ACP. This is Glycerol-3-phosphate acyltransferase from Idiomarina loihiensis (strain ATCC BAA-735 / DSM 15497 / L2-TR).